Reading from the N-terminus, the 339-residue chain is GTP 3',8-cyclase (339 aa).

Residues 13 to 249 (RYGRPLRDLR…GEVAQRHAFA (237 aa)) enclose the Radical SAM core domain. R22 contributes to the GTP binding site. 2 residues coordinate [4Fe-4S] cluster: C29 and C33. Y35 contributes to the S-adenosyl-L-methionine binding site. C36 is a [4Fe-4S] cluster binding site. R75 is a GTP binding site. S-adenosyl-L-methionine is bound at residue G79. T106 is a binding site for GTP. Position 130 (S130) interacts with S-adenosyl-L-methionine. K168 lines the GTP pocket. M202 is an S-adenosyl-L-methionine binding site. 2 residues coordinate [4Fe-4S] cluster: C266 and C269. A GTP-binding site is contributed by 271-273 (RAR). [4Fe-4S] cluster is bound at residue C283.

This sequence belongs to the radical SAM superfamily. MoaA family. In terms of assembly, monomer and homodimer. [4Fe-4S] cluster is required as a cofactor.

The enzyme catalyses GTP + AH2 + S-adenosyl-L-methionine = (8S)-3',8-cyclo-7,8-dihydroguanosine 5'-triphosphate + 5'-deoxyadenosine + L-methionine + A + H(+). The protein operates within cofactor biosynthesis; molybdopterin biosynthesis. Functionally, catalyzes the cyclization of GTP to (8S)-3',8-cyclo-7,8-dihydroguanosine 5'-triphosphate. This chain is GTP 3',8-cyclase, found in Xanthomonas campestris pv. campestris (strain 8004).